We begin with the raw amino-acid sequence, 351 residues long: Anthranilate phosphoribosyltransferase (351 aa).

5-phospho-alpha-D-ribose 1-diphosphate-binding positions include Gly-84, 87–88 (GD), 95–98 (NISS), 113–121 (KHGNRGASS), and Ala-125. An anthranilate-binding site is contributed by Gly-84. Ser-97 is a binding site for Mg(2+). Asn-116 is a binding site for anthranilate. Arg-171 lines the anthranilate pocket. Mg(2+) is bound by residues Asp-229 and Lys-230.

Belongs to the anthranilate phosphoribosyltransferase family. In terms of assembly, homodimer. Mg(2+) is required as a cofactor.

It carries out the reaction N-(5-phospho-beta-D-ribosyl)anthranilate + diphosphate = 5-phospho-alpha-D-ribose 1-diphosphate + anthranilate. It functions in the pathway amino-acid biosynthesis; L-tryptophan biosynthesis; L-tryptophan from chorismate: step 2/5. Its function is as follows. Catalyzes the transfer of the phosphoribosyl group of 5-phosphorylribose-1-pyrophosphate (PRPP) to anthranilate to yield N-(5'-phosphoribosyl)-anthranilate (PRA). In Clavibacter sepedonicus (Clavibacter michiganensis subsp. sepedonicus), this protein is Anthranilate phosphoribosyltransferase.